The primary structure comprises 348 residues: Phosphate acyltransferase (348 aa).

The protein belongs to the PlsX family. As to quaternary structure, homodimer. Probably interacts with PlsY.

Its subcellular location is the cytoplasm. The catalysed reaction is a fatty acyl-[ACP] + phosphate = an acyl phosphate + holo-[ACP]. It participates in lipid metabolism; phospholipid metabolism. In terms of biological role, catalyzes the reversible formation of acyl-phosphate (acyl-PO(4)) from acyl-[acyl-carrier-protein] (acyl-ACP). This enzyme utilizes acyl-ACP as fatty acyl donor, but not acyl-CoA. In Francisella philomiragia subsp. philomiragia (strain ATCC 25017 / CCUG 19701 / FSC 153 / O#319-036), this protein is Phosphate acyltransferase.